We begin with the raw amino-acid sequence, 367 residues long: tRNA-specific 2-thiouridylase MnmA (367 aa).

Residues 12-19 (GMSGGVDS) and M38 each bind ATP. Positions 98–100 (NPD) are interaction with target base in tRNA. Residue C103 is the Nucleophile of the active site. Residues C103 and C200 are joined by a disulfide bond. Position 128 (G128) interacts with ATP. The interaction with tRNA stretch occupies residues 150–152 (KDQ). The active-site Cysteine persulfide intermediate is the C200. The segment at 312 to 313 (RY) is interaction with tRNA.

The protein belongs to the MnmA/TRMU family. In terms of assembly, interacts with TusE.

The protein localises to the cytoplasm. It carries out the reaction S-sulfanyl-L-cysteinyl-[protein] + uridine(34) in tRNA + AH2 + ATP = 2-thiouridine(34) in tRNA + L-cysteinyl-[protein] + A + AMP + diphosphate + H(+). Catalyzes the 2-thiolation of uridine at the wobble position (U34) of tRNA(Lys), tRNA(Glu) and tRNA(Gln), leading to the formation of s(2)U34, the first step of tRNA-mnm(5)s(2)U34 synthesis. Sulfur is provided by IscS, via a sulfur-relay system. Binds ATP and its substrate tRNAs. This chain is tRNA-specific 2-thiouridylase MnmA, found in Proteus mirabilis (strain HI4320).